Reading from the N-terminus, the 548-residue chain is T-complex protein 1 subunit alpha (548 aa).

The protein belongs to the TCP-1 chaperonin family. In terms of assembly, heterooligomeric complex of about 850 to 900 kDa that forms two stacked rings, 12 to 16 nm in diameter.

It localises to the cytoplasm. Functionally, molecular chaperone; assists the folding of proteins upon ATP hydrolysis. Known to play a role, in vitro, in the folding of actin and tubulin. The polypeptide is T-complex protein 1 subunit alpha (tcp1) (Dictyostelium discoideum (Social amoeba)).